The primary structure comprises 368 residues: tRNA-cytidine(32) 2-sulfurtransferase (368 aa).

The PP-loop motif motif lies at 95 to 100 (SGGKDS). [4Fe-4S] cluster-binding residues include cysteine 170, cysteine 173, and cysteine 261.

It belongs to the TtcA family. As to quaternary structure, homodimer. Mg(2+) is required as a cofactor. It depends on [4Fe-4S] cluster as a cofactor.

It is found in the cytoplasm. It catalyses the reaction cytidine(32) in tRNA + S-sulfanyl-L-cysteinyl-[cysteine desulfurase] + AH2 + ATP = 2-thiocytidine(32) in tRNA + L-cysteinyl-[cysteine desulfurase] + A + AMP + diphosphate + H(+). It functions in the pathway tRNA modification. Its function is as follows. Catalyzes the ATP-dependent 2-thiolation of cytidine in position 32 of tRNA, to form 2-thiocytidine (s(2)C32). The sulfur atoms are provided by the cysteine/cysteine desulfurase (IscS) system. The protein is tRNA-cytidine(32) 2-sulfurtransferase of Psychrobacter sp. (strain PRwf-1).